Consider the following 194-residue polypeptide: Recombination protein RecR (194 aa).

The C4-type zinc-finger motif lies at 52–67 (CTECRTFTEEEVCHIC). Positions 76–171 (GQICVVESPA…EASRIAHGVP (96 aa)) constitute a Toprim domain.

Belongs to the RecR family.

In terms of biological role, may play a role in DNA repair. It seems to be involved in an RecBC-independent recombinational process of DNA repair. It may act with RecF and RecO. The protein is Recombination protein RecR of Vibrio campbellii (strain ATCC BAA-1116).